We begin with the raw amino-acid sequence, 276 residues long: MSNEISIKIGSLLNEVRNKKPLVHNITNYVTVNDCANILLAIGASPIMADDIKEAADITKISSALVINIGTLNERTIESMIASGKKANELNIPVVFDPVGAGASEFRNSTTKRLLEEVKISVLRGNMSEIKFISGLGSTTKGVDASENDARTGNDEGIDVAKNLAKKLQCTVAITGATDIISDGERVVILENGTKMLSNVTGTGCMTTALIGAFCGAGSDYFIGAVSGIISMGISGEIALDKAGKIGTGSFHIAIIDAISNLTSNIIEKMNKIKEI.

M48 serves as a coordination point for substrate. ATP contacts are provided by R124 and T175. A substrate-binding site is contributed by G202.

The protein belongs to the Thz kinase family. Mg(2+) is required as a cofactor.

It catalyses the reaction 5-(2-hydroxyethyl)-4-methylthiazole + ATP = 4-methyl-5-(2-phosphooxyethyl)-thiazole + ADP + H(+). It functions in the pathway cofactor biosynthesis; thiamine diphosphate biosynthesis; 4-methyl-5-(2-phosphoethyl)-thiazole from 5-(2-hydroxyethyl)-4-methylthiazole: step 1/1. Functionally, catalyzes the phosphorylation of the hydroxyl group of 4-methyl-5-beta-hydroxyethylthiazole (THZ). This chain is Hydroxyethylthiazole kinase, found in Clostridium beijerinckii (strain ATCC 51743 / NCIMB 8052) (Clostridium acetobutylicum).